We begin with the raw amino-acid sequence, 190 residues long: MIGRITGTLIEKTPPVVYVDVNGIGYEIDVPMSTLYALPDTGARVTLFTHLVVREDAHLLYGFGTASERAAFRELVKVSGIGARTALAVLSGMSVAELAQAITLQESGRLTRVPGIGKKTAERLLLEMRGKLGADIGATPHAVPDSQSDILNALLALGYSEKESLAALKTLPEGLGVSDGIRQALKALAR.

The interval 1 to 64 (MIGRITGTLI…EDAHLLYGFG (64 aa)) is domain I. Residues 65 to 137 (TASERAAFRE…MRGKLGADIG (73 aa)) are domain II. A flexible linker region spans residues 137–141 (GATPH). The tract at residues 142–190 (AVPDSQSDILNALLALGYSEKESLAALKTLPEGLGVSDGIRQALKALAR) is domain III.

The protein belongs to the RuvA family. Homotetramer. Forms an RuvA(8)-RuvB(12)-Holliday junction (HJ) complex. HJ DNA is sandwiched between 2 RuvA tetramers; dsDNA enters through RuvA and exits via RuvB. An RuvB hexamer assembles on each DNA strand where it exits the tetramer. Each RuvB hexamer is contacted by two RuvA subunits (via domain III) on 2 adjacent RuvB subunits; this complex drives branch migration. In the full resolvosome a probable DNA-RuvA(4)-RuvB(12)-RuvC(2) complex forms which resolves the HJ.

The protein localises to the cytoplasm. The RuvA-RuvB-RuvC complex processes Holliday junction (HJ) DNA during genetic recombination and DNA repair, while the RuvA-RuvB complex plays an important role in the rescue of blocked DNA replication forks via replication fork reversal (RFR). RuvA specifically binds to HJ cruciform DNA, conferring on it an open structure. The RuvB hexamer acts as an ATP-dependent pump, pulling dsDNA into and through the RuvAB complex. HJ branch migration allows RuvC to scan DNA until it finds its consensus sequence, where it cleaves and resolves the cruciform DNA. In Bordetella avium (strain 197N), this protein is Holliday junction branch migration complex subunit RuvA.